A 121-amino-acid chain; its full sequence is Chromosome transmission fidelity protein 8 homolog (121 aa).

Belongs to the CTF8 family. As to quaternary structure, component of the CTF18-RFC complex, which consists of CTF18, CTF8, DSCC1, RFC2, RFC3, RFC4 and RFC5. The CTF18-RFC complex does not interact with the Rad9/Rad1/Hus1 complex. The CTF18-RFC complex interacts with POLH. CTF18/CTF8/DSCC1 associate with PCNA. CTF8 exists as a dimer with DSCC1.

It localises to the nucleus. In terms of biological role, chromosome cohesion factor involved in sister chromatid cohesion and fidelity of chromosome transmission. Component of one of the cell nuclear antigen loader complexes, CTF18-replication factor C (CTF18-RFC), which consists of CTF18, CTF8, DSCC1, RFC2, RFC3, RFC4 and RFC5. The CTF18-RFC complex binds to single-stranded and primed DNAs and has weak ATPase activity that is stimulated the presence of primed DNA, replication protein A (RPA) and proliferating cell nuclear antigen (PCNA). The CTF18-RFC complex catalyzes the ATP-dependent loading of PCNA onto primed and gapped DNA. It also interacts with and stimulates POLH, which is suggestive of a protein network that coordinates DNA repair, recombination and chromosome cohesion reactions with replication fork progression. This Homo sapiens (Human) protein is Chromosome transmission fidelity protein 8 homolog.